The following is a 191-amino-acid chain: Cytochrome b-245 light chain (191 aa).

Residues 2-7 (GQIEWA) are Cytoplasmic-facing. The helical transmembrane segment at 8 to 30 (MWANEQALASGLILITGGIVATA) threads the bilayer. Residues 31-35 (GQFTQ) lie on the Extracellular side of the membrane. Residues 36–53 (WYLGAYSIAAGVLVCLLE) form a helical membrane-spanning segment. Over 54–69 (YPRGKRSKGSTMERCG) the chain is Cytoplasmic. The stretch at 70-80 (QKYLTRVVKLF) is an intramembrane region. At 81–86 (GPLTRN) the chain is on the cytoplasmic side. The helical transmembrane segment at 87–104 (YYIRAFLHLGLAVPAGFL) threads the bilayer. A topological domain (extracellular) is located at residue L105. The chain crosses the membrane as a helical span at residues 106–126 (ATILGTACLAIASGIYLLAAI). Over 127–191 (RGEQWSPIEP…NPMPVNDEVV (65 aa)) the chain is Cytoplasmic. The interval 134–191 (IEPKPKERPQIGGTIKQPPSNPPPRPPAEARKKPSEEAAGVPTGGPQENPMPVNDEVV) is disordered. At T147 the chain carries Phosphothreonine. Residue K149 forms a Glycyl lysine isopeptide (Lys-Gly) (interchain with G-Cter in ubiquitin) linkage. Position 168 is a phosphoserine (S168).

It belongs to the p22phox family. As to quaternary structure, component of the phagocyte NADPH oxidase core complex/cytochrome b558 complex, composed of CYBB (heavy chain (beta)) and CYBA (light chain (alpha)). Component of the phagocyte NADPH oxidase complex composed of an obligatory core heterodimer formed by the membrane proteins CYBA and CYBB and the cytosolic regulatory subunits NCF1/p47-phox, NCF2/p67-phox, NCF4/p40-phox and the small GTPase RAC1 or RAC2. Interacts with NCF1 (via SH3 domain). Interacts with SH3PXD2A. Interacts with DUOX1, DUOX2 and TPO. Interacts with NOX4; this interaction mediates superoxide generation. Interacts with calprotectin (S100A8/9). Interacts with GBP7. Interacts with NOXO1. Forms a heterodimer with NOX3 and is essential for activity and cell membrane localization of NOX3. Interacts with NOX1. Post-translationally, phosphorylation at Thr-147 enhances NADPH oxidase activity by promoting NCF1/p47-phox binding. Ubiquitinated at Lys-149 likely by RNF145.

It is found in the cell membrane. Its function is as follows. Subunit of NADPH oxidase complexes that is required for the NADPH oxidase activity that generates, in various cell types, superoxide from molecular oxygen utilizing NADPH as an electron donor. Subunit of the phagocyte NADPH oxidase complex that mediates the transfer of electrons from cytosolic NADPH to O2 to produce the superoxide anion (O2(-)). In the activated complex, electrons are first transferred from NADPH to flavin adenine dinucleotide (FAD) and subsequently transferred via two heme molecules to molecular oxygen, producing superoxide through an outer-sphere reaction. Activation of the NADPH oxidase complex is initiated by the assembly of cytosolic subunits of the NADPH oxidase complex with the core NADPH oxidase complex to form a complex at the plasma membrane or phagosomal membrane. This activation process is initiated by phosphorylation dependent binding of the cytosolic NCF1/p47-phox subunit to the C-terminus of CYBA/p22-phox. Aassociates with NOX3 to form a functional NADPH oxidase constitutively generating superoxide. The polypeptide is Cytochrome b-245 light chain (Bos taurus (Bovine)).